A 376-amino-acid polypeptide reads, in one-letter code: Carbamoyl phosphate synthase small chain (376 aa).

The segment at methionine 1 to glutamine 187 is CPSase. L-glutamine-binding residues include serine 45, glycine 239, and glycine 241. In terms of domain architecture, Glutamine amidotransferase type-1 spans lysine 189–cysteine 376. Residue cysteine 266 is the Nucleophile of the active site. L-glutamine is bound by residues leucine 267, glutamine 270, asparagine 308, glycine 310, and phenylalanine 311. Catalysis depends on residues histidine 349 and glutamate 351.

This sequence belongs to the CarA family. In terms of assembly, composed of two chains; the small (or glutamine) chain promotes the hydrolysis of glutamine to ammonia, which is used by the large (or ammonia) chain to synthesize carbamoyl phosphate. Tetramer of heterodimers (alpha,beta)4.

The enzyme catalyses hydrogencarbonate + L-glutamine + 2 ATP + H2O = carbamoyl phosphate + L-glutamate + 2 ADP + phosphate + 2 H(+). It catalyses the reaction L-glutamine + H2O = L-glutamate + NH4(+). Its pathway is amino-acid biosynthesis; L-arginine biosynthesis; carbamoyl phosphate from bicarbonate: step 1/1. The protein operates within pyrimidine metabolism; UMP biosynthesis via de novo pathway; (S)-dihydroorotate from bicarbonate: step 1/3. Small subunit of the glutamine-dependent carbamoyl phosphate synthetase (CPSase). CPSase catalyzes the formation of carbamoyl phosphate from the ammonia moiety of glutamine, carbonate, and phosphate donated by ATP, constituting the first step of 2 biosynthetic pathways, one leading to arginine and/or urea and the other to pyrimidine nucleotides. The small subunit (glutamine amidotransferase) binds and cleaves glutamine to supply the large subunit with the substrate ammonia. This Lawsonia intracellularis (strain PHE/MN1-00) protein is Carbamoyl phosphate synthase small chain.